The following is a 142-amino-acid chain: Hemoglobin larval subunit alpha (142 aa).

Residues 2-142 (VLSAEEKALV…VSAVLTSKYR (141 aa)) form the Globin domain. Histidine 59 contacts O2. Residue histidine 88 coordinates heme b.

It belongs to the globin family. As to quaternary structure, heterotetramer of two alpha chains and two beta chains. In terms of tissue distribution, red blood cells.

Involved in oxygen transport from the lung to the various peripheral tissues. The protein is Hemoglobin larval subunit alpha of Pleurodeles waltl (Iberian ribbed newt).